A 286-amino-acid polypeptide reads, in one-letter code: Shikimate dehydrogenase (NADP(+)) (286 aa).

Residues 20 to 22 and S67 contribute to the shikimate site; that span reads SLS. The active-site Proton acceptor is the K71. Residues N92 and D107 each contribute to the shikimate site. NADP(+)-binding positions include 131–135 and A230; that span reads GGGGA. Y232 is a binding site for shikimate. G253 is an NADP(+) binding site.

Belongs to the shikimate dehydrogenase family. In terms of assembly, homodimer.

The enzyme catalyses shikimate + NADP(+) = 3-dehydroshikimate + NADPH + H(+). It functions in the pathway metabolic intermediate biosynthesis; chorismate biosynthesis; chorismate from D-erythrose 4-phosphate and phosphoenolpyruvate: step 4/7. Functionally, involved in the biosynthesis of the chorismate, which leads to the biosynthesis of aromatic amino acids. Catalyzes the reversible NADPH linked reduction of 3-dehydroshikimate (DHSA) to yield shikimate (SA). In Lactococcus lactis subsp. lactis (strain IL1403) (Streptococcus lactis), this protein is Shikimate dehydrogenase (NADP(+)).